Here is a 925-residue protein sequence, read N- to C-terminus: Isoleucine--tRNA ligase (925 aa).

Positions 57-67 (PYANGDIHMGH) match the 'HIGH' region motif. E556 contributes to the L-isoleucyl-5'-AMP binding site. Residues 597–601 (KMSKS) carry the 'KMSKS' region motif. K600 lines the ATP pocket. The Zn(2+) site is built by C890, C893, C910, and C913.

It belongs to the class-I aminoacyl-tRNA synthetase family. IleS type 1 subfamily. As to quaternary structure, monomer. Zn(2+) serves as cofactor.

It localises to the cytoplasm. It catalyses the reaction tRNA(Ile) + L-isoleucine + ATP = L-isoleucyl-tRNA(Ile) + AMP + diphosphate. Functionally, catalyzes the attachment of isoleucine to tRNA(Ile). As IleRS can inadvertently accommodate and process structurally similar amino acids such as valine, to avoid such errors it has two additional distinct tRNA(Ile)-dependent editing activities. One activity is designated as 'pretransfer' editing and involves the hydrolysis of activated Val-AMP. The other activity is designated 'posttransfer' editing and involves deacylation of mischarged Val-tRNA(Ile). The chain is Isoleucine--tRNA ligase from Carboxydothermus hydrogenoformans (strain ATCC BAA-161 / DSM 6008 / Z-2901).